A 620-amino-acid chain; its full sequence is MAAATADPGAGNPQPGDSSGGGAGGGLPSPGEQELSRRLQRLYPAVNQQETPLPRSWSPKDKYNYIGLSQGNLRVHYKGHGKNHKDAASVRATHPIPAACGIYYFEVKIVSKGRDGYMGIGLSAQGVNMNRLPGWDKHSYGYHGDDGHSFCSSGTGQPYGPTFTTGDVIGCCVNLINGTCFYTKNGHSLGIAFTDLPANLYPTVGLQTPGEIVDANFGQQPFLFDIEDYMREWRAKVQGTVHCFPISARLGEWQAVLQNMVSSYLVHHGYCATATAFARMTETPIQEEQASIKNRQKIQKLVLEGRVGEAIETTQRFYPGLLEHNPNLLFMLKCRQFVEMVNGTDSEVRSLSSRSPKSQDSYPGSPSLSPRHGPSSSHMHNTGADSPSCSNGVASTKSKQNHSKYPAPSSSSSSSSSSSSSSPSSVNYSESNSTDSTKSQHHSSTSNQETSDSEMEMEAEHYPNGVLGSMSTRIVNGAYKHEDLQTDESSMDDRHPRRQLCGGNQAATERIILFGRELQALSEQLGREYGKNLAHTEMLQDAFSLLAYSDPWSCPVGQQLDPIQREPVCAALNSAILESQNLPKQPPLMLALGQASECLRLMARAGLGSCSFARVDDYLH.

The interval 1–41 is disordered; sequence MAAATADPGAGNPQPGDSSGGGAGGGLPSPGEQELSRRLQR. An N-acetylalanine modification is found at Ala-2. Residues 18-28 show a composition bias toward gly residues; it reads SSGGGAGGGLP. The B30.2/SPRY domain maps to 35 to 222; the sequence is LSRRLQRLYP…VDANFGQQPF (188 aa). Residues 253 to 285 enclose the LisH domain; it reads WQAVLQNMVSSYLVHHGYCATATAFARMTETPI. Residues 291–348 form the CTLH domain; it reads SIKNRQKIQKLVLEGRVGEAIETTQRFYPGLLEHNPNLLFMLKCRQFVEMVNGTDSEV. The segment covering 347 to 398 has biased composition (polar residues); it reads EVRSLSSRSPKSQDSYPGSPSLSPRHGPSSSHMHNTGADSPSCSNGVASTKS. The disordered stretch occupies residues 347–458; sequence EVRSLSSRSP…ETSDSEMEME (112 aa). Ser-361 bears the Phosphoserine mark. A Phosphotyrosine modification is found at Tyr-362. Phosphoserine is present on residues Ser-365, Ser-367, Ser-369, Ser-422, Ser-451, and Ser-453. Residues 409–436 show a composition bias toward low complexity; that stretch reads SSSSSSSSSSSSSSPSSVNYSESNSTDS.

Belongs to the RANBP9/10 family. As to quaternary structure, may form homodimers. Identified in the CTLH complex that contains GID4, RANBP9 and/or RANBP10, MKLN1, MAEA, RMND5A (or alternatively its paralog RMND5B), GID8, ARMC8, WDR26 and YPEL5. Within this complex, MAEA, RMND5A (or alternatively its paralog RMND5B), GID8, WDR26, and RANBP9 and/or RANBP10 form the catalytic core, while GID4, MKLN1, ARMC8 and YPEL5 have ancillary roles. Interacts with RAN and RANBP9. Interacts with the HGF receptor MET. Interacts with AR. Interacts with TUBB1. Interacts with YPEL5. May interact with TUBB5. Interacts with DDX4. As to expression, broadly expressed, with highest levels in skeletal muscle.

It localises to the cytoplasm. The protein resides in the cytosol. Its subcellular location is the nucleus. May act as an adapter protein to couple membrane receptors to intracellular signaling pathways. Core component of the CTLH E3 ubiquitin-protein ligase complex that selectively accepts ubiquitin from UBE2H and mediates ubiquitination and subsequent proteasomal degradation of the transcription factor HBP1. Enhances dihydrotestosterone-induced transactivation activity of AR, as well as dexamethasone-induced transactivation activity of NR3C1, but does not affect estrogen-induced transactivation. Acts as a guanine nucleotide exchange factor (GEF) for RAN GTPase. May play an essential role in hemostasis and in maintaining microtubule dynamics with respect to both platelet shape and function. The chain is Ran-binding protein 10 (RANBP10) from Homo sapiens (Human).